Consider the following 165-residue polypeptide: Phosphopantetheine adenylyltransferase (165 aa).

A substrate-binding site is contributed by threonine 10. Residues 10-11 (TF) and histidine 18 each bind ATP. Lysine 42, leucine 75, and arginine 89 together coordinate substrate. ATP contacts are provided by residues 90–92 (GVR), glutamate 100, and 125–131 (VSFISSS).

Belongs to the bacterial CoaD family. In terms of assembly, homohexamer. It depends on Mg(2+) as a cofactor.

The protein resides in the cytoplasm. The catalysed reaction is (R)-4'-phosphopantetheine + ATP + H(+) = 3'-dephospho-CoA + diphosphate. Its pathway is cofactor biosynthesis; coenzyme A biosynthesis; CoA from (R)-pantothenate: step 4/5. Reversibly transfers an adenylyl group from ATP to 4'-phosphopantetheine, yielding dephospho-CoA (dPCoA) and pyrophosphate. This chain is Phosphopantetheine adenylyltransferase, found in Buchnera aphidicola subsp. Schizaphis graminum (strain Sg).